A 260-amino-acid chain; its full sequence is Cytosolic Fe-S cluster assembly factor Nubp2 homolog (260 aa).

14–21 (GKGGVGKS) contacts ATP. Cys-188 and Cys-191 together coordinate [4Fe-4S] cluster.

Belongs to the Mrp/NBP35 ATP-binding proteins family. NUBP2/CFD1 subfamily. In terms of assembly, heterotetramer of 2 Nubp1 and 2 Nubp2 chains. It depends on [4Fe-4S] cluster as a cofactor.

The protein localises to the cytoplasm. Its function is as follows. Component of the cytosolic iron-sulfur (Fe/S) protein assembly (CIA) machinery. Required for maturation of extramitochondrial Fe-S proteins. The Nubp1-Nubp2 heterotetramer forms a Fe-S scaffold complex, mediating the de novo assembly of an Fe-S cluster and its transfer to target apoproteins. In Drosophila melanogaster (Fruit fly), this protein is Cytosolic Fe-S cluster assembly factor Nubp2 homolog.